We begin with the raw amino-acid sequence, 346 residues long: Phosphoribosylformylglycinamidine cyclo-ligase (346 aa).

The protein belongs to the AIR synthase family.

The protein localises to the cytoplasm. The catalysed reaction is 2-formamido-N(1)-(5-O-phospho-beta-D-ribosyl)acetamidine + ATP = 5-amino-1-(5-phospho-beta-D-ribosyl)imidazole + ADP + phosphate + H(+). It functions in the pathway purine metabolism; IMP biosynthesis via de novo pathway; 5-amino-1-(5-phospho-D-ribosyl)imidazole from N(2)-formyl-N(1)-(5-phospho-D-ribosyl)glycinamide: step 2/2. This Prochlorococcus marinus (strain NATL2A) protein is Phosphoribosylformylglycinamidine cyclo-ligase.